Here is a 565-residue protein sequence, read N- to C-terminus: Bifunctional dihydrofolate reductase-thymidylate synthase 2 (565 aa).

The region spanning Thr-65–Arg-242 is the DHFR domain. Position 69 (Val-69) interacts with substrate. Residues Ala-71 and Gly-77–Lys-83 each bind NADP(+). Asp-91 is a binding site for substrate. Residues Arg-115–Thr-117 and Leu-136–Ser-139 contribute to the NADP(+) site. Ile-178 lines the substrate pocket. Gly-179 to Glu-186 is an NADP(+) binding site. Residue Thr-199 participates in substrate binding. The segment at Ser-245–His-280 is hinge. A thymidylate synthase region spans residues Glu-281 to Val-565. Arg-302 is a binding site for dUMP. Cys-447 is a catalytic residue. DUMP-binding positions include His-448, Gln-466–Asp-470, Asn-478, and His-508–Tyr-510.

It in the N-terminal section; belongs to the dihydrofolate reductase family. In the C-terminal section; belongs to the thymidylate synthase family. As to quaternary structure, heterodimer or homodimer.

The enzyme catalyses (6S)-5,6,7,8-tetrahydrofolate + NADP(+) = 7,8-dihydrofolate + NADPH + H(+). The catalysed reaction is dUMP + (6R)-5,10-methylene-5,6,7,8-tetrahydrofolate = 7,8-dihydrofolate + dTMP. It participates in cofactor biosynthesis; tetrahydrofolate biosynthesis; 5,6,7,8-tetrahydrofolate from 7,8-dihydrofolate: step 1/1. In terms of biological role, bifunctional enzyme. Involved in de novo dTMP biosynthesis. Key enzyme in folate metabolism. Can play two different roles depending on the source of dihydrofolate: de novo synthesis of tetrahydrofolate or recycling of the dihydrofolate released as one of the end products of the TS catalyzed reaction. Catalyzes an essential reaction for de novo glycine and purine synthesis, DNA precursor synthesis, and for the conversion of dUMP to dTMP. This is Bifunctional dihydrofolate reductase-thymidylate synthase 2 (THY-2) from Arabidopsis thaliana (Mouse-ear cress).